A 192-amino-acid chain; its full sequence is MTTPSRRRLMRDFKKLQEDPPAGVSGAPTEDNILTWEAIIFGPQETPFEDGTFKLSLEFTEEYPNKPPTVKFISKMFHPNVYADGSICLDILQNRWSPTYDVAAILTSIQSLLDEPNPNSPANSLAAQLYQENRREYEKRVQQIVEQSWLNFGENEGDAVLKDDVEIEEIAAPGANDADDDRMDEGASGSNA.

Residues 1-28 are disordered; the sequence is MTTPSRRRLMRDFKKLQEDPPAGVSGAP. The region spanning 4 to 150 is the UBC core domain; sequence PSRRRLMRDF…VQQIVEQSWL (147 aa). C88 functions as the Glycyl thioester intermediate in the catalytic mechanism. A disordered region spans residues 171 to 192; it reads AAPGANDADDDRMDEGASGSNA.

This sequence belongs to the ubiquitin-conjugating enzyme family. As to quaternary structure, interacts with ubr-1 and rfp-1. Interacts with ubc-13.

It carries out the reaction S-ubiquitinyl-[E1 ubiquitin-activating enzyme]-L-cysteine + [E2 ubiquitin-conjugating enzyme]-L-cysteine = [E1 ubiquitin-activating enzyme]-L-cysteine + S-ubiquitinyl-[E2 ubiquitin-conjugating enzyme]-L-cysteine.. Its pathway is protein modification; protein ubiquitination. In terms of biological role, catalyzes the covalent attachment of ubiquitin to other proteins. This Caenorhabditis elegans protein is Ubiquitin-conjugating enzyme E2 1 (ubc-1).